Here is a 353-residue protein sequence, read N- to C-terminus: uncharacterized protein (353 aa).

The segment at 69 to 106 (ISSATPSSTPPATRASSRLQPPKGHQAGGSNSQQQQPS) is disordered. A compositionally biased stretch (low complexity) spans 70–86 (SSATPSSTPPATRASSR). Residues 319–353 (GENKEKKMREMSRVYREMTRQMDDTRRDLDRLNQG) are a coiled coil.

This is an uncharacterized protein from Gibberella zeae (strain ATCC MYA-4620 / CBS 123657 / FGSC 9075 / NRRL 31084 / PH-1) (Wheat head blight fungus).